Consider the following 416-residue polypeptide: uncharacterized protein (416 aa).

Zn(2+) is bound by residues H29, D31, E144, H215, and H236.

It belongs to the metallo-dependent hydrolases superfamily. Peptidase M19 family. Requires Zn(2+) as cofactor.

It catalyses the reaction an L-aminoacyl-L-amino acid + H2O = 2 an L-alpha-amino acid. This is an uncharacterized protein from Schizosaccharomyces pombe (strain 972 / ATCC 24843) (Fission yeast).